Consider the following 519-residue polypeptide: Cytochrome P450 4A11 (519 aa).

The propeptide occupies 1 to 4 (MSVS). Residue E321 coordinates heme. Residue S440 is modified to Phosphoserine. A heme-binding site is contributed by C457.

The protein belongs to the cytochrome P450 family. It depends on heme as a cofactor. As to expression, expressed in liver. Expressed in S2 and S3 segments of proximal tubules in cortex and outer medulla of kidney.

The protein resides in the endoplasmic reticulum membrane. Its subcellular location is the microsome membrane. The enzyme catalyses an organic molecule + reduced [NADPH--hemoprotein reductase] + O2 = an alcohol + oxidized [NADPH--hemoprotein reductase] + H2O + H(+). The catalysed reaction is an omega-methyl-long-chain fatty acid + reduced [NADPH--hemoprotein reductase] + O2 = an omega-hydroxy-long-chain fatty acid + oxidized [NADPH--hemoprotein reductase] + H2O + H(+). It catalyses the reaction dodecanoate + reduced [NADPH--hemoprotein reductase] + O2 = 12-hydroxydodecanoate + oxidized [NADPH--hemoprotein reductase] + H2O + H(+). It carries out the reaction tetradecanoate + reduced [NADPH--hemoprotein reductase] + O2 = 14-hydroxytetradecanoate + oxidized [NADPH--hemoprotein reductase] + H2O + H(+). The enzyme catalyses hexadecanoate + reduced [NADPH--hemoprotein reductase] + O2 = 16-hydroxyhexadecanoate + oxidized [NADPH--hemoprotein reductase] + H2O + H(+). The catalysed reaction is (9Z)-octadecenoate + reduced [NADPH--hemoprotein reductase] + O2 = 18-hydroxy-(9Z)-octadecenoate + oxidized [NADPH--hemoprotein reductase] + H2O + H(+). It catalyses the reaction (5Z,8Z,11Z,14Z)-eicosatetraenoate + reduced [NADPH--hemoprotein reductase] + O2 = 20-hydroxy-(5Z,8Z,11Z,14Z)-eicosatetraenoate + oxidized [NADPH--hemoprotein reductase] + H2O + H(+). It carries out the reaction 22-hydroxydocosanoate + reduced [NADPH--hemoprotein reductase] + O2 = 22-oxodocosanoate + oxidized [NADPH--hemoprotein reductase] + 2 H2O + H(+). The enzyme catalyses 22-oxodocosanoate + reduced [NADPH--hemoprotein reductase] + O2 = docosanedioate + oxidized [NADPH--hemoprotein reductase] + H2O + 2 H(+). The catalysed reaction is (9R,10S)-epoxy-octadecanoate + reduced [NADPH--hemoprotein reductase] + O2 = 18-hydroxy-(9R,10S)-epoxy-octadecanoate + oxidized [NADPH--hemoprotein reductase] + H2O + H(+). It catalyses the reaction 3-hydroxyhexadecanoate + reduced [NADPH--hemoprotein reductase] + O2 = 3,16-dihydroxyhexadecanoate + oxidized [NADPH--hemoprotein reductase] + H2O + H(+). Its pathway is lipid metabolism; arachidonate metabolism. It participates in lipid metabolism; oxylipin biosynthesis. With respect to regulation, activated by cytochrome b5. Functionally, a cytochrome P450 monooxygenase involved in the metabolism of fatty acids and their oxygenated derivatives (oxylipins). Mechanistically, uses molecular oxygen inserting one oxygen atom into a substrate, and reducing the second into a water molecule, with two electrons provided by NADPH via cytochrome P450 reductase (CPR; NADPH-ferrihemoprotein reductase). Catalyzes predominantly the oxidation of the terminal carbon (omega-oxidation) of saturated and unsaturated fatty acids, the catalytic efficiency decreasing in the following order: dodecanoic &gt; tetradecanoic &gt; (9Z)-octadecenoic &gt; (9Z,12Z)-octadecadienoic &gt; hexadecanoic acid. Acts as a major omega-hydroxylase for dodecanoic (lauric) acid in liver. Participates in omega-hydroxylation of (5Z,8Z,11Z,14Z)-eicosatetraenoic acid (arachidonate) to 20-hydroxyeicosatetraenoic acid (20-HETE), a signaling molecule acting both as vasoconstrictive and natriuretic with overall effect on arterial blood pressure. Can also catalyze the oxidation of the penultimate carbon (omega-1 oxidation) of fatty acids with lower efficiency. May contribute to the degradation of saturated very long-chain fatty acids (VLCFAs) such as docosanoic acid, by catalyzing successive omega-oxidations to the corresponding dicarboxylic acid, thereby initiating chain shortening. Omega-hydroxylates (9R,10S)-epoxy-octadecanoate stereoisomer. Plays a minor role in omega-oxidation of long-chain 3-hydroxy fatty acids. Has little activity toward prostaglandins A1 and E1. This chain is Cytochrome P450 4A11, found in Homo sapiens (Human).